The following is a 222-amino-acid chain: LexA repressor (222 aa).

Residues 28–48 (IREIGEHMDIRSTNGVNDHLK) constitute a DNA-binding region (H-T-H motif). Active-site for autocatalytic cleavage activity residues include Ser-135 and Lys-172.

This sequence belongs to the peptidase S24 family. As to quaternary structure, homodimer.

It carries out the reaction Hydrolysis of Ala-|-Gly bond in repressor LexA.. Represses a number of genes involved in the response to DNA damage (SOS response), including recA and lexA. In the presence of single-stranded DNA, RecA interacts with LexA causing an autocatalytic cleavage which disrupts the DNA-binding part of LexA, leading to derepression of the SOS regulon and eventually DNA repair. The sequence is that of LexA repressor from Myxococcus xanthus (strain DK1622).